Here is a 156-residue protein sequence, read N- to C-terminus: Phosphopantetheine adenylyltransferase (156 aa).

Substrate is bound at residue T9. Residues 9–10 (TF) and H17 each bind ATP. Substrate-binding residues include K41, L73, and R87. ATP is bound by residues 88-90 (GVR), E98, and 123-129 (WVFVSST).

It belongs to the bacterial CoaD family. Homohexamer. Mg(2+) serves as cofactor.

The protein resides in the cytoplasm. The catalysed reaction is (R)-4'-phosphopantetheine + ATP + H(+) = 3'-dephospho-CoA + diphosphate. Its pathway is cofactor biosynthesis; coenzyme A biosynthesis; CoA from (R)-pantothenate: step 4/5. Reversibly transfers an adenylyl group from ATP to 4'-phosphopantetheine, yielding dephospho-CoA (dPCoA) and pyrophosphate. The protein is Phosphopantetheine adenylyltransferase of Haemophilus influenzae (strain PittEE).